Consider the following 303-residue polypeptide: N-acetyl-D-glucosamine kinase (303 aa).

ATP is bound by residues 4–11 (GFDIGGSK) and 133–140 (GVGGGLIV). Positions 157, 177, 179, and 184 each coordinate Zn(2+).

Belongs to the ROK (NagC/XylR) family. NagK subfamily.

The catalysed reaction is N-acetyl-D-glucosamine + ATP = N-acetyl-D-glucosamine 6-phosphate + ADP + H(+). It functions in the pathway cell wall biogenesis; peptidoglycan recycling. Its function is as follows. Catalyzes the phosphorylation of N-acetyl-D-glucosamine (GlcNAc) derived from cell-wall degradation, yielding GlcNAc-6-P. The protein is N-acetyl-D-glucosamine kinase of Erwinia tasmaniensis (strain DSM 17950 / CFBP 7177 / CIP 109463 / NCPPB 4357 / Et1/99).